Consider the following 479-residue polypeptide: U2 small nuclear ribonucleoprotein auxiliary factor 35 kDa subunit-related protein 1 (479 aa).

The tract at residues 1 to 63 (MAALEKMTFP…EDTFIEEQQL (63 aa)) is disordered. The segment covering 20–37 (SHKKYRAALKKEKRKKRR) has biased composition (basic residues). The span at 50–63 (QEEEEDTFIEEQQL) shows a compositional bias: acidic residues. Residue Lys67 forms a Glycyl lysine isopeptide (Lys-Gly) (interchain with G-Cter in SUMO2) linkage. The segment at 171–199 (EKDRANCPFYSKTGACRFGDRCSRKHNFP) adopts a C3H1-type 1 zinc-finger fold. In terms of domain architecture, RRM spans 203 to 309 (PTLLIKSMFT…RQLQCEFCPV (107 aa)). Residues 311 to 338 (RWKMAICGLFEIQQCPRGKHCNFLHVFR) form a C3H1-type 2 zinc finger. The residue at position 354 (Ser354) is a Phosphoserine. The tract at residues 356–479 (DQTGSSFGKN…DRTVQSPQSK (124 aa)) is disordered. 2 stretches are compositionally biased toward basic and acidic residues: residues 365-379 (NSER…DHYY) and 388-403 (PSPD…SERK). Ser389 is subject to Phosphoserine. Basic residues-rich tracts occupy residues 404 to 417 (KSSH…KRTS) and 442 to 451 (SQSRRSHRSR).

It is found in the nucleus. The protein is U2 small nuclear ribonucleoprotein auxiliary factor 35 kDa subunit-related protein 1 of Homo sapiens (Human).